The primary structure comprises 273 residues: Putative pyruvate, phosphate dikinase regulatory protein (273 aa).

An ADP-binding site is contributed by 149-156 (GPSRTSKT).

It belongs to the pyruvate, phosphate/water dikinase regulatory protein family. PDRP subfamily.

It catalyses the reaction N(tele)-phospho-L-histidyl/L-threonyl-[pyruvate, phosphate dikinase] + ADP = N(tele)-phospho-L-histidyl/O-phospho-L-threonyl-[pyruvate, phosphate dikinase] + AMP + H(+). The catalysed reaction is N(tele)-phospho-L-histidyl/O-phospho-L-threonyl-[pyruvate, phosphate dikinase] + phosphate + H(+) = N(tele)-phospho-L-histidyl/L-threonyl-[pyruvate, phosphate dikinase] + diphosphate. Functionally, bifunctional serine/threonine kinase and phosphorylase involved in the regulation of the pyruvate, phosphate dikinase (PPDK) by catalyzing its phosphorylation/dephosphorylation. This Rickettsia felis (strain ATCC VR-1525 / URRWXCal2) (Rickettsia azadi) protein is Putative pyruvate, phosphate dikinase regulatory protein.